A 205-amino-acid polypeptide reads, in one-letter code: uncharacterized protein (205 aa).

One can recognise an HD domain in the interval 26–129 (DWHHVSRVAD…VQDADRLDAI (104 aa)).

This is an uncharacterized protein from Bacillus subtilis (strain 168).